We begin with the raw amino-acid sequence, 595 residues long: Protein kinase C iota type (595 aa).

Over residues 1 to 12 (MPTQRDSSTMSH) the composition is skewed to polar residues. The interval 1 to 21 (MPTQRDSSTMSHTVACGGGGD) is disordered. Residue Pro2 is modified to N-acetylproline. Residues 2-28 (PTQRDSSTMSHTVACGGGGDHSHQVRV) are required for interaction with RAB2. The interval 2–252 (PTQRDSSTMS…KASSSLGLQD (251 aa)) is regulatory domain. The residue at position 3 (Thr3) is a Phosphothreonine. Phosphoserine occurs at positions 7 and 8. Phosphothreonine is present on Thr9. Residues 25 to 108 (QVRVKAYYRG…SELLIHVFPC (84 aa)) form the PB1 domain. The tract at residues 72-91 (DEEGDPCTVSSQLELEEAFR) is interaction with PARD6A. The Pseudosubstrate signature appears at 125 to 134 (YRRGARRWRK). The Phorbol-ester/DAG-type zinc-finger motif lies at 140–190 (GHTFQAKRFNRRAHCAICTDRIWGLGRQGYKCINCKLLVHKKCHKLVTIEC). The region spanning 253 to 521 (FDLLRVIGRG…FADIQGHPFF (269 aa)) is the Protein kinase domain. Residue 259–267 (IGRGSYAKV) coordinates ATP. Phosphotyrosine; by SRC occurs at positions 264 and 279. ATP is bound at residue Lys282. Tyr333 is subject to Phosphotyrosine; by SRC. Asp377 acts as the Proton acceptor in catalysis. Residues Thr411 and Thr563 each carry the phosphothreonine modification. The AGC-kinase C-terminal domain occupies 522–593 (RNVDWDMMEQ…INPLLMSAEE (72 aa)).

Belongs to the protein kinase superfamily. AGC Ser/Thr protein kinase family. PKC subfamily. As to quaternary structure, forms a complex with SQSTM1 and MP2K5. Interacts directly with SQSTM1. Interacts with IKBKB. Interacts with PARD6A, PARD6B and PARD6G. Part of a quaternary complex containing aPKC, PARD3, a PARD6 protein (PARD6A, PARD6B or PARD6G) and a GTPase protein (CDC42 or RAC1). Part of a complex with LLGL1 and PARD6B. Interacts with ADAP1/CENTA1. Interaction with SMG1, through the ZN-finger domain, activates the kinase activity. Interacts with CDK7. Forms a complex with RAB2A and GAPDH involved in recruitment onto the membrane of vesicular tubular clusters (VTCs). Interacts with ECT2 ('Thr-359' phosphorylated form). Interacts with VAMP2. Interacts with WDFY2 (via WD repeats 1-3). Phosphorylation at Thr-411 in the activation loop is not mandatory for activation. Upon neuronal growth factor (NGF) stimulation, phosphorylated by SRC at Tyr-264, Tyr-279 and Tyr-333. Phosphorylation on Tyr-264 facilitates binding to KPNB1/importin-beta regulating entry of PRKCI into the nucleus. Phosphorylation on Tyr-333 is important for NF-kappa-B stimulation. Phosphorylated at Thr-563 during the initial phase of long term potentiation.

It is found in the cytoplasm. The protein resides in the membrane. The protein localises to the endosome. Its subcellular location is the nucleus. It catalyses the reaction L-seryl-[protein] + ATP = O-phospho-L-seryl-[protein] + ADP + H(+). The enzyme catalyses L-threonyl-[protein] + ATP = O-phospho-L-threonyl-[protein] + ADP + H(+). With respect to regulation, atypical PKCs (PRKCI and PRKCZ) exhibit an elevated basal enzymatic activity (that may be due to the interaction with SMG1 or SQSTM1) and are not regulated by diacylglycerol, phosphatidylserine, phorbol esters or calcium ions. Two specific sites, Thr-411 (activation loop of the kinase domain) and Thr-563 (turn motif), need to be phosphorylated for its full activation. Might also be a target for novel lipid activators that are elevated during nutrient-stimulated insulin secretion. Calcium- and diacylglycerol-independent serine/ threonine-protein kinase that plays a general protective role against apoptotic stimuli, is involved in NF-kappa-B activation, cell survival, differentiation and polarity, and contributes to the regulation of microtubule dynamics in the early secretory pathway. Is necessary for BCR-ABL oncogene-mediated resistance to apoptotic drug in leukemia cells, protecting leukemia cells against drug-induced apoptosis. In cultured neurons, prevents amyloid beta protein-induced apoptosis by interrupting cell death process at a very early step. In glioblastoma cells, may function downstream of phosphatidylinositol 3-kinase (PI3K) and PDPK1 in the promotion of cell survival by phosphorylating and inhibiting the pro-apoptotic factor BAD. Can form a protein complex in non-small cell lung cancer (NSCLC) cells with PARD6A and ECT2 and regulate ECT2 oncogenic activity by phosphorylation, which in turn promotes transformed growth and invasion. In response to nerve growth factor (NGF), acts downstream of SRC to phosphorylate and activate IRAK1, allowing the subsequent activation of NF-kappa-B and neuronal cell survival. Functions in the organization of the apical domain in epithelial cells by phosphorylating EZR. This step is crucial for activation and normal distribution of EZR at the early stages of intestinal epithelial cell differentiation. Forms a protein complex with LLGL1 and PARD6B independently of PARD3 to regulate epithelial cell polarity. Plays a role in microtubule dynamics in the early secretory pathway through interaction with RAB2A and GAPDH and recruitment to vesicular tubular clusters (VTCs). In human coronary artery endothelial cells (HCAEC), is activated by saturated fatty acids and mediates lipid-induced apoptosis. Downstream of PI3K is required for insulin-stimulated glucose transport. Activates RAB4A and promotes its association with KIF3A which is required for the insulin-induced SLC2A4/GLUT4 translocation in adipocytes. Is essential in early embryogenesis and development of differentiating photoreceptors by playing a role in the establishment of epithelial and neuronal polarity. Involved in early synaptic long term potentiation phase in CA1 hippocampal cells and short term memory formation. The chain is Protein kinase C iota type (Prkci) from Mus musculus (Mouse).